The following is a 472-amino-acid chain: 3-isopropylmalate dehydratase large subunit (472 aa).

Positions 353, 414, and 417 each coordinate [4Fe-4S] cluster.

Belongs to the aconitase/IPM isomerase family. LeuC type 1 subfamily. Heterodimer of LeuC and LeuD. Requires [4Fe-4S] cluster as cofactor.

It catalyses the reaction (2R,3S)-3-isopropylmalate = (2S)-2-isopropylmalate. It functions in the pathway amino-acid biosynthesis; L-leucine biosynthesis; L-leucine from 3-methyl-2-oxobutanoate: step 2/4. Its function is as follows. Catalyzes the isomerization between 2-isopropylmalate and 3-isopropylmalate, via the formation of 2-isopropylmaleate. This Acinetobacter baumannii (strain ACICU) protein is 3-isopropylmalate dehydratase large subunit.